Here is an 805-residue protein sequence, read N- to C-terminus: Endonuclease MutS2 (805 aa).

Residue 344 to 351 (GPNGGGKT) coordinates ATP. Residues 705–724 (RSRSEKLQAASEARPSAPPG) are disordered. One can recognise a Smr domain in the interval 729 to 804 (LDVRGLRVEE…GDAVTVVSLR (76 aa)).

Belongs to the DNA mismatch repair MutS family. MutS2 subfamily. Homodimer. Binds to stalled ribosomes, contacting rRNA.

In terms of biological role, endonuclease that is involved in the suppression of homologous recombination and thus may have a key role in the control of bacterial genetic diversity. Functionally, acts as a ribosome collision sensor, splitting the ribosome into its 2 subunits. Detects stalled/collided 70S ribosomes which it binds and splits by an ATP-hydrolysis driven conformational change. Acts upstream of the ribosome quality control system (RQC), a ribosome-associated complex that mediates the extraction of incompletely synthesized nascent chains from stalled ribosomes and their subsequent degradation. Probably generates substrates for RQC. The polypeptide is Endonuclease MutS2 (Anaeromyxobacter sp. (strain Fw109-5)).